Consider the following 64-residue polypeptide: Large ribosomal subunit protein bL28 (64 aa).

This sequence belongs to the bacterial ribosomal protein bL28 family.

The sequence is that of Large ribosomal subunit protein bL28 from Elusimicrobium minutum (strain Pei191).